The sequence spans 321 residues: tRNA-dihydrouridine synthase B (321 aa).

Residues 16–18 (PMA) and Gln-70 contribute to the FMN site. Cys-100 (proton donor) is an active-site residue. Residues Lys-139, 200 to 202 (NGD), and 224 to 225 (GR) each bind FMN.

The protein belongs to the Dus family. DusB subfamily. FMN is required as a cofactor.

It catalyses the reaction a 5,6-dihydrouridine in tRNA + NAD(+) = a uridine in tRNA + NADH + H(+). The catalysed reaction is a 5,6-dihydrouridine in tRNA + NADP(+) = a uridine in tRNA + NADPH + H(+). Catalyzes the synthesis of 5,6-dihydrouridine (D), a modified base found in the D-loop of most tRNAs, via the reduction of the C5-C6 double bond in target uridines. The polypeptide is tRNA-dihydrouridine synthase B (Salmonella typhi).